The primary structure comprises 859 residues: DNA mismatch repair protein MutS (859 aa).

Position 617–624 (Gly-617–Ser-624) interacts with ATP. The interval Glu-799–Ser-821 is disordered.

This sequence belongs to the DNA mismatch repair MutS family.

Functionally, this protein is involved in the repair of mismatches in DNA. It is possible that it carries out the mismatch recognition step. This protein has a weak ATPase activity. This Pseudomonas savastanoi pv. phaseolicola (strain 1448A / Race 6) (Pseudomonas syringae pv. phaseolicola (strain 1448A / Race 6)) protein is DNA mismatch repair protein MutS.